The sequence spans 757 residues: Protein Lines homolog 1 (757 aa).

Residue Ser635 is modified to Phosphoserine.

Belongs to the protein lines family. Expressed in adult testis, prostate, prostate, spleen, thymus, skeletal muscle, fetal kidney and brain.

The protein is Protein Lines homolog 1 of Homo sapiens (Human).